Here is a 91-residue protein sequence, read N- to C-terminus: Small ribosomal subunit protein uS19 (91 aa).

The protein belongs to the universal ribosomal protein uS19 family.

Functionally, protein S19 forms a complex with S13 that binds strongly to the 16S ribosomal RNA. The chain is Small ribosomal subunit protein uS19 from Bordetella avium (strain 197N).